The chain runs to 331 residues: Bifunctional nuclease (331 aa).

Residues 126-261 form the BFN domain; the sequence is CVQNNPRVLR…RIAYNNGLKV (136 aa). The UVR domain maps to 291–326; it reads EAQEFDLVRNMLVAAVEERYKDAAQYRDQLFMFRAK.

Belongs to the bifunctional nuclease family.

It localises to the nucleus. In terms of biological role, bifunctional nuclease with both RNase and DNase activities. Involved in basal defense response. Participates in abscisic acid-derived callose deposition following infection by a necrotrophic pathogen. The chain is Bifunctional nuclease (BBD) from Oryza minuta.